Consider the following 154-residue polypeptide: Histone H2B.5 (154 aa).

A compositionally biased stretch (basic and acidic residues) spans 1-25 (MAPKAEKKPAAKKVAEEEPSEKAAP). A disordered region spans residues 1–62 (MAPKAEKKPA…DKKGRKKAKK (62 aa)). 2 positions are modified to N6-acetyllysine: Lys-7 and Lys-39. Lys-150 participates in a covalent cross-link: Glycyl lysine isopeptide (Lys-Gly) (interchain with G-Cter in ubiquitin).

This sequence belongs to the histone H2B family. The nucleosome is a histone octamer containing two molecules each of H2A, H2B, H3 and H4 assembled in one H3-H4 heterotetramer and two H2A-H2B heterodimers. The octamer wraps approximately 147 bp of DNA. Post-translationally, can be acetylated to form H2BK6ac and H2BK33ac. Monoubiquitinated to form H2BK143ub1; may give a specific tag for epigenetic transcriptional activation.

The protein localises to the nucleus. The protein resides in the chromosome. Functionally, core component of nucleosome. Nucleosomes wrap and compact DNA into chromatin, limiting DNA accessibility to the cellular machineries which require DNA as a template. Histones thereby play a central role in transcription regulation, DNA repair, DNA replication and chromosomal stability. DNA accessibility is regulated via a complex set of post-translational modifications of histones, also called histone code, and nucleosome remodeling. The sequence is that of Histone H2B.5 from Zea mays (Maize).